We begin with the raw amino-acid sequence, 492 residues long: Mitochondrial distribution and morphology protein 12 (492 aa).

Residues 1–492 enclose the SMP-LTD domain; sequence MSIDLNWETV…VYPSFWTFLV (492 aa). Disordered stretches follow at residues 68-158, 199-301, and 379-434; these read DFYE…STPG, LEGH…GHPR, and AVGG…GSGN. The span at 78-90 shows a compositional bias: acidic residues; sequence VASDDSEGEEDAV. The segment covering 130-139 has biased composition (gly residues); the sequence is SPGGPGGPGM. Low complexity predominate over residues 246–257; the sequence is LNPNSLAPPSSS. Residues 270–285 are compositionally biased toward polar residues; that stretch reads TTPAPGSATALSGSNE. Residues 387 to 400 show a composition bias toward low complexity; that stretch reads GLSSPGEGPSQAQG. The segment covering 401–415 has biased composition (gly residues); sequence QGQGQGQGQGQGQTP. Positions 416–428 are enriched in low complexity; that stretch reads GAGQQKQQKKQAG.

This sequence belongs to the MDM12 family. In terms of assembly, component of the ER-mitochondria encounter structure (ERMES) or MDM complex, composed of MMM1, MDM10, MDM12 and MDM34. An MMM1 homodimer associates with one molecule of MDM12 on each side in a pairwise head-to-tail manner, and the SMP-LTD domains of MMM1 and MDM12 generate a continuous hydrophobic tunnel for phospholipid trafficking.

Its subcellular location is the mitochondrion outer membrane. The protein resides in the endoplasmic reticulum membrane. In terms of biological role, component of the ERMES/MDM complex, which serves as a molecular tether to connect the endoplasmic reticulum (ER) and mitochondria. Components of this complex are involved in the control of mitochondrial shape and protein biogenesis, and function in nonvesicular lipid trafficking between the ER and mitochondria. MDM12 is required for the interaction of the ER-resident membrane protein MMM1 and the outer mitochondrial membrane-resident beta-barrel protein MDM10. The MDM12-MMM1 subcomplex functions in the major beta-barrel assembly pathway that is responsible for biogenesis of all mitochondrial outer membrane beta-barrel proteins, and acts in a late step after the SAM complex. The MDM10-MDM12-MMM1 subcomplex further acts in the TOM40-specific pathway after the action of the MDM12-MMM1 complex. Essential for establishing and maintaining the structure of mitochondria and maintenance of mtDNA nucleoids. The chain is Mitochondrial distribution and morphology protein 12 from Chaetomium globosum (strain ATCC 6205 / CBS 148.51 / DSM 1962 / NBRC 6347 / NRRL 1970) (Soil fungus).